We begin with the raw amino-acid sequence, 332 residues long: L-lactate dehydrogenase A chain (332 aa).

Ala2 carries the post-translational modification N-acetylalanine. At Lys5 the chain carries N6-acetyllysine; alternate. Lys5 is modified (N6-succinyllysine; alternate). Lys14 is subject to N6-acetyllysine. 29-57 serves as a coordination point for NAD(+); the sequence is GAVGMACAISILMKELADEIALVDVMEDK. The residue at position 57 (Lys57) is an N6-acetyllysine; alternate. Residue Lys57 forms a Glycyl lysine isopeptide (Lys-Gly) (interchain with G-Cter in SUMO2); alternate linkage. Lys81 carries the N6-acetyllysine modification. Arg99 is an NAD(+) binding site. A substrate-binding site is contributed by Arg106. An N6-acetyllysine; alternate modification is found at Lys118. Lys118 carries the post-translational modification N6-succinyllysine; alternate. An N6-acetyllysine modification is found at Lys126. An NAD(+)-binding site is contributed by Asn138. Asn138 and Arg169 together coordinate substrate. His193 acts as the Proton acceptor in catalysis. 2 positions are modified to N6-acetyllysine: Lys224 and Lys232. At Tyr239 the chain carries Phosphotyrosine. Lys243 carries the post-translational modification N6-acetyllysine. Residue Thr248 coordinates substrate. Residue Thr309 is modified to Phosphothreonine. Residue Lys318 is modified to N6-acetyllysine; alternate. At Lys318 the chain carries N6-succinyllysine; alternate. At Thr322 the chain carries Phosphothreonine.

It belongs to the LDH/MDH superfamily. LDH family. As to quaternary structure, homotetramer. Interacts with PTEN upstream reading frame protein MP31. ISGylated.

The protein localises to the cytoplasm. It carries out the reaction (S)-lactate + NAD(+) = pyruvate + NADH + H(+). It functions in the pathway fermentation; pyruvate fermentation to lactate; (S)-lactate from pyruvate: step 1/1. Functionally, interconverts simultaneously and stereospecifically pyruvate and lactate with concomitant interconversion of NADH and NAD(+). This chain is L-lactate dehydrogenase A chain (LDHA), found in Sus scrofa (Pig).